An 817-amino-acid chain; its full sequence is Collagen-like protein 4 (817 aa).

Collagen-like domains are found at residues 83–142, 145–264, and 268–327; these read GDTG…KGQD, GSKG…KGDD, and GIQG…KGLK. Disordered stretches follow at residues 87–107, 120–458, and 479–543; these read NKGE…GDNG, FNGS…DKGD, and IIGD…KGDI. N-linked (GlcNAc...) asparagine; by host glycans are attached at residues asparagine 106 and asparagine 121. Basic and acidic residues-rich tracts occupy residues 126–141 and 149–161; these read IKGD…DKGQ and QKGE…DDGI. An N-linked (GlcNAc...) asparagine; by host glycan is attached at asparagine 183. Composition is skewed to basic and acidic residues over residues 212–224 and 233–245; these read IKGD…EDGI and SKGE…DDGT. The span at 246 to 260 shows a compositional bias: low complexity; it reads KGITGLKGTKGNSGS. The span at 294–341 shows a compositional bias: basic and acidic residues; the sequence is KGSDGDKGNKGLDGIKGDLGDDGIKGDKGIKGLKGDTGNSDKGDKGSK. Residues asparagine 345 and asparagine 360 are each glycosylated (N-linked (GlcNAc...) asparagine; by host). 2 Collagen-like domains span residues 352-411 and 430-489; these read GDKG…KGLV and GDKG…KGIK. Basic and acidic residues-rich tracts occupy residues 354–368, 377–390, and 428–458; these read KGSK…ESGD, SKGD…KGDL, and SKGD…DKGD. Over residues 480-494 the composition is skewed to low complexity; the sequence is IGDNGSKGIKGSSNN. A glycan (N-linked (GlcNAc...) asparagine; by host) is linked at asparagine 483. Basic and acidic residues-rich tracts occupy residues 495 to 504, 515 to 525, and 533 to 543; these read KGDKGDKGNT, IKGDKGIKGSK, and EKGEKGTKGDI. A Collagen-like 6 domain is found at 512-570; it reads TKGIKGDKGIKGSKGDLGSVGEKGEKGTKGDIGTKGETGLKGIIGDKGELGSKGIKGLS. N-linked (GlcNAc...) asparagine; by host glycans are attached at residues asparagine 709, asparagine 712, and asparagine 715. The span at 757–771 shows a compositional bias: gly residues; sequence GGGGASAFGNGGRGG. Positions 757 to 804 are disordered; sequence GGGGASAFGNGGRGGNTTQAATKGEYGSGGGGGSEFSPSGSTNGGDGG. N-linked (GlcNAc...) asparagine; by host glycosylation is present at asparagine 772.

Post-translationally, may be hydroxylated on lysine by the viral-encoded procollagen-lysine,2-oxoglutarate 5-dioxygenase.

It localises to the virion. Functionally, may participate in the formation of a layer of cross-linked glycosylated fibrils at the viral surface thus giving it a hairy-like appearance. The chain is Collagen-like protein 4 from Acanthamoeba polyphaga (Amoeba).